Here is a 148-residue protein sequence, read N- to C-terminus: Ubiquitin-conjugating enzyme E2 5B (148 aa).

The region spanning Met-1 to Met-147 is the UBC core domain. Catalysis depends on Cys-85, which acts as the Glycyl thioester intermediate.

This sequence belongs to the ubiquitin-conjugating enzyme family.

The catalysed reaction is S-ubiquitinyl-[E1 ubiquitin-activating enzyme]-L-cysteine + [E2 ubiquitin-conjugating enzyme]-L-cysteine = [E1 ubiquitin-activating enzyme]-L-cysteine + S-ubiquitinyl-[E2 ubiquitin-conjugating enzyme]-L-cysteine.. Its pathway is protein modification; protein ubiquitination. Its function is as follows. E2 conjugating enzyme that associates with the E3 ubiquitin-protein ligase EL5 to mediate ubiquitination of target proteins. The chain is Ubiquitin-conjugating enzyme E2 5B (UBC5B) from Oryza sativa subsp. japonica (Rice).